Reading from the N-terminus, the 450-residue chain is UDP-N-acetylmuramoylalanine--D-glutamate ligase (450 aa).

Glycine 112–threonine 118 contributes to the ATP binding site.

The protein belongs to the MurCDEF family.

It is found in the cytoplasm. The catalysed reaction is UDP-N-acetyl-alpha-D-muramoyl-L-alanine + D-glutamate + ATP = UDP-N-acetyl-alpha-D-muramoyl-L-alanyl-D-glutamate + ADP + phosphate + H(+). It functions in the pathway cell wall biogenesis; peptidoglycan biosynthesis. Its function is as follows. Cell wall formation. Catalyzes the addition of glutamate to the nucleotide precursor UDP-N-acetylmuramoyl-L-alanine (UMA). This Cytophaga hutchinsonii (strain ATCC 33406 / DSM 1761 / CIP 103989 / NBRC 15051 / NCIMB 9469 / D465) protein is UDP-N-acetylmuramoylalanine--D-glutamate ligase.